The chain runs to 310 residues: Flavin-dependent trigonelline monooxygenase, reductase component (310 aa).

Residues 40–43 (TANS), 57–63 (SIAKTSS), 90–91 (FA), and arginine 97 contribute to the FMN site.

The protein belongs to the non-flavoprotein flavin reductase family. As to quaternary structure, homodimer. The trigonelline monooxygenase is composed of a reductase component TgnA and an oxygenase component TgnB.

The enzyme catalyses a reduced flavin + NAD(+) = an oxidized flavin + NADH + 2 H(+). It catalyses the reaction FADH2 + NAD(+) = FAD + NADH + 2 H(+). It carries out the reaction FMNH2 + NAD(+) = FMN + NADH + 2 H(+). Its activity is regulated as follows. Maximal reductase activity is achieved only upon trigonelline (TG) binding to the reductase component before interaction with NADH. It seems that TgnA undergoes an allosteric transition upon trigonelline (TG) binding accounting for the positive cooperativity toward NADH oxidation. Functionally, involved in the degradation of the pyridine ring of trigonelline (TG; N-methylnicotinate) into succinate and methylamine as carbon and nitrogen sources, respectively. TgnA catalyzes the reduction of flavin (FMN or FAD) by NADH and supplies the reduced flavin to the oxygenase component TgnB. This is Flavin-dependent trigonelline monooxygenase, reductase component from Acinetobacter baylyi (strain ATCC 33305 / BD413 / ADP1).